Consider the following 161-residue polypeptide: Endoribonuclease YbeY (161 aa).

The Zn(2+) site is built by His121, His125, and His131.

This sequence belongs to the endoribonuclease YbeY family. Requires Zn(2+) as cofactor.

Its subcellular location is the cytoplasm. Functionally, single strand-specific metallo-endoribonuclease involved in late-stage 70S ribosome quality control and in maturation of the 3' terminus of the 16S rRNA. The polypeptide is Endoribonuclease YbeY (Xanthomonas campestris pv. campestris (strain 8004)).